The sequence spans 765 residues: DNA topoisomerase 1 (765 aa).

Over residues 1-23 (MSGDHLHNDSQIEADFRLNDSHK) the composition is skewed to basic and acidic residues. The interval 1–199 (MSGDHLHNDS…NKKKKPKKEE (199 aa)) is disordered. Position 2 is an N-acetylserine (serine 2). Phosphoserine occurs at positions 2 and 10. Basic residues predominate over residues 24–39 (HKDKHKDREHRHKEHK). The span at 40–108 (KEKDREKSKH…DAKIKKEKEN (69 aa)) shows a compositional bias: basic and acidic residues. At serine 57 the chain carries Phosphoserine. Lysine 101 is covalently cross-linked (Glycyl lysine isopeptide (Lys-Gly) (interchain with G-Cter in SUMO2)). Lysine 103 is covalently cross-linked (Glycyl lysine isopeptide (Lys-Gly) (interchain with G-Cter in SUMO); alternate). A Glycyl lysine isopeptide (Lys-Gly) (interchain with G-Cter in SUMO2); alternate cross-link involves residue lysine 103. Phosphoserine is present on serine 112. Residue lysine 117 forms a Glycyl lysine isopeptide (Lys-Gly) (interchain with G-Cter in SUMO); alternate linkage. Residue lysine 117 forms a Glycyl lysine isopeptide (Lys-Gly) (interchain with G-Cter in SUMO2); alternate linkage. Lysine 117 participates in a covalent cross-link: Glycyl lysine isopeptide (Lys-Gly) (interchain with G-Cter in SUMO1); alternate. The span at 129-166 (PKEDIKPLKRPRDEDDADYKPKKIKTEDTKKEKKRKLE) shows a compositional bias: basic and acidic residues. Residues lysine 134 and lysine 148 each participate in a glycyl lysine isopeptide (Lys-Gly) (interchain with G-Cter in SUMO2) cross-link. Lysine 153 is covalently cross-linked (Glycyl lysine isopeptide (Lys-Gly) (interchain with G-Cter in SUMO); alternate). Lysine 153 participates in a covalent cross-link: Glycyl lysine isopeptide (Lys-Gly) (interchain with G-Cter in SUMO2); alternate. Residues lysine 158 and lysine 164 each participate in a glycyl lysine isopeptide (Lys-Gly) (interchain with G-Cter in SUMO2) cross-link. Lysine 172 is covalently cross-linked (Glycyl lysine isopeptide (Lys-Gly) (interchain with G-Cter in SUMO2); alternate). The residue at position 172 (lysine 172) is an N6-acetyllysine; alternate. The span at 179–199 (KDKDKKVPEPDNKKKKPKKEE) shows a compositional bias: basic and acidic residues. Lysine 204 participates in a covalent cross-link: Glycyl lysine isopeptide (Lys-Gly) (interchain with G-Cter in SUMO2). Lysine 280 bears the N6-acetyllysine mark. Lysine 336 participates in a covalent cross-link: Glycyl lysine isopeptide (Lys-Gly) (interchain with G-Cter in SUMO2). 2 interaction with DNA regions span residues 425 to 426 (KY) and 488 to 493 (RAGNEK). The Topo IB-type catalytic domain maps to 432–765 (SSRIKGEKDW…IDMADEDYEF (334 aa)). A Phosphoserine; by CK2 modification is found at serine 506. Lysine 549 is covalently cross-linked (Glycyl lysine isopeptide (Lys-Gly) (interchain with G-Cter in SUMO2)). The segment at 585 to 587 (TAK) is interaction with DNA. Glycyl lysine isopeptide (Lys-Gly) (interchain with G-Cter in SUMO2) cross-links involve residues lysine 642, lysine 700, and lysine 712. Tyrosine 723 serves as the catalytic O-(3'-phospho-DNA)-tyrosine intermediate.

This sequence belongs to the type IB topoisomerase family. In terms of assembly, monomer. Interacts with ERCC6. Interacts with TPRN; TPRN interacts with a number of DNA damage response proteins, is recruited to sites of DNA damage and may play a role in DNA damage repair. (Microbial infection) Interacts with SV40 Large T antigen; this interactions allows viral DNA replication. In terms of processing, sumoylated. Lys-117 is the main site of sumoylation. Sumoylation plays a role in partitioning TOP1 between nucleoli and nucleoplasm. Levels are dramatically increased on camptothecin (CPT) treatment. Phosphorylation at Ser-506 by CK2 increases binding to supercoiled DNA and sensitivity to camptothecin. As to expression, endothelial cells.

The protein localises to the nucleus. Its subcellular location is the nucleolus. The protein resides in the nucleoplasm. It carries out the reaction ATP-independent breakage of single-stranded DNA, followed by passage and rejoining.. Its activity is regulated as follows. Specifically inhibited by camptothecin (CPT), a plant alkaloid with antitumor activity. In terms of biological role, releases the supercoiling and torsional tension of DNA introduced during the DNA replication and transcription by transiently cleaving and rejoining one strand of the DNA duplex. Introduces a single-strand break via transesterification at a target site in duplex DNA. The scissile phosphodiester is attacked by the catalytic tyrosine of the enzyme, resulting in the formation of a DNA-(3'-phosphotyrosyl)-enzyme intermediate and the expulsion of a 5'-OH DNA strand. The free DNA strand then rotates around the intact phosphodiester bond on the opposing strand, thus removing DNA supercoils. Finally, in the religation step, the DNA 5'-OH attacks the covalent intermediate to expel the active-site tyrosine and restore the DNA phosphodiester backbone. Regulates the alternative splicing of tissue factor (F3) pre-mRNA in endothelial cells. Involved in the circadian transcription of the core circadian clock component BMAL1 by altering the chromatin structure around the ROR response elements (ROREs) on the BMAL1 promoter. The sequence is that of DNA topoisomerase 1 (TOP1) from Homo sapiens (Human).